Reading from the N-terminus, the 156-residue chain is Small ribosomal subunit protein uS7 (156 aa).

It belongs to the universal ribosomal protein uS7 family. As to quaternary structure, part of the 30S ribosomal subunit. Contacts proteins S9 and S11.

Functionally, one of the primary rRNA binding proteins, it binds directly to 16S rRNA where it nucleates assembly of the head domain of the 30S subunit. Is located at the subunit interface close to the decoding center, probably blocks exit of the E-site tRNA. The protein is Small ribosomal subunit protein uS7 of Rhodococcus opacus (strain B4).